Reading from the N-terminus, the 169-residue chain is MLVSLIPELPLENPFQDATDRFYVLPRLIGTVSNMVWPIKILRVAMETTQDLGACDATFYVRYTDSCQARTGEDADRVAIVRRIWDEQFDVFKIVGRTESYRSLGNGESTTSRETVVHCSKDIDSMEQSDMHDGFDGYVGLYSELTNLGSWLVVIHLNMLIRIVNPIAC.

This sequence belongs to the UPF0725 (EMB2204) family.

This is UPF0725 protein At2g19200 from Arabidopsis thaliana (Mouse-ear cress).